A 227-amino-acid polypeptide reads, in one-letter code: Thiocyanate methyltransferase 1 (227 aa).

Residues tryptophan 36, tryptophan 40, tryptophan 47, and glycine 74 each coordinate S-adenosyl-L-methionine. Residue serine 86 is modified to Phosphoserine. S-adenosyl-L-methionine contacts are provided by residues aspartate 95, 123–124 (DV), and tyrosine 139.

It belongs to the class I-like SAM-binding methyltransferase superfamily. TPMT family. Expressed in shoots, leaves, stems, inflorescences, flowers and green siliques.

The enzyme catalyses thiocyanate + S-adenosyl-L-methionine = methyl thiocyanate + S-adenosyl-L-homocysteine. S-adenosyl-L-methionine-dependent methyltransferase. Involved in glucosinolate metabolism and defense against phytopathogens. Highly reactive to thiocyanate (NCS(-)) derived from myrosinase-mediated hydrolysis of glucosinolates upon tissue damage. In Arabidopsis thaliana (Mouse-ear cress), this protein is Thiocyanate methyltransferase 1.